A 604-amino-acid chain; its full sequence is uncharacterized protein (604 aa).

The ABC transmembrane type-1 domain occupies 45–329 (LPLSFLTVLI…LGQVYNQLLM (285 aa)). Transmembrane regions (helical) follow at residues 49 to 69 (FLTV…IGVY), 82 to 102 (LLIQ…AANV), 162 to 182 (VINL…LFTL), 184 to 204 (PELT…STSL), 273 to 293 (LVEM…ATLI), and 297 to 317 (TITI…WEPI). An ABC transporter domain is found at 363–597 (ISFEEVEFSY…GGIYAGLVKA (235 aa)). 396–403 (GHTGSGKT) is an ATP binding site.

The protein belongs to the ABC transporter superfamily.

The protein resides in the cell membrane. This is an uncharacterized protein from Bacillus subtilis (strain 168).